Consider the following 304-residue polypeptide: MRLPIFLDTDPGIDDAVAIAAAIFAPELDLQLMTTVAGNVSVEKTTRNALQLLHFWNAEIPLAQGAAVPLVRAPRDAASVHGESGMAGYDFVEHNRKPLGIPAFLAIRDALMRAPEPVTLVAIGPLTNIALLLSQCPECKPYIRRLVIMGGSAGRGNCTPNAEFNIAADPEAAACVFRSGIEIVMCGLDVTNQAILTPDYLATLPELNRTGKMLHALFSHYRSGSMQSGLRMHDLCAIAWLVRPDLFTLKPCFVAVETQGEFTSGTTVVDIDGCLGKPANVQVALDLNVKGFQQWVAEVLALVP.

Residue histidine 233 is part of the active site.

It belongs to the IUNH family. RihC subfamily.

In terms of biological role, hydrolyzes both purine and pyrimidine ribonucleosides with a broad-substrate specificity. This Escherichia coli O17:K52:H18 (strain UMN026 / ExPEC) protein is Non-specific ribonucleoside hydrolase RihC.